The sequence spans 295 residues: 33 kDa chaperonin (295 aa).

Cystine bridges form between cysteine 236–cysteine 238 and cysteine 269–cysteine 272.

It belongs to the HSP33 family. In terms of processing, under oxidizing conditions two disulfide bonds are formed involving the reactive cysteines. Under reducing conditions zinc is bound to the reactive cysteines and the protein is inactive.

The protein resides in the cytoplasm. Redox regulated molecular chaperone. Protects both thermally unfolding and oxidatively damaged proteins from irreversible aggregation. Plays an important role in the bacterial defense system toward oxidative stress. The chain is 33 kDa chaperonin from Geobacter sp. (strain M21).